Consider the following 919-residue polypeptide: Translocase of chloroplast 101, chloroplastic (919 aa).

Disordered stretches follow at residues 20–47 and 64–211; these read SASR…VIEG and VDDE…NETR. Positions 73–88 are enriched in basic and acidic residues; that stretch reads SENKAVVETEKVESKP. A compositionally biased stretch (acidic residues) spans 96-128; it reads FAEEDGDSDADAEDEDDEDDEDDDEDDDDEDDK. The segment covering 182–207 has biased composition (polar residues); it reads QRPNGAPSTQLTATTEENANSDTAEG. One can recognise an AIG1-type G domain in the interval 284–513; that stretch reads DFACTILVLG…KLQETATPGR (230 aa). Positions 293–300 are G1; the sequence is GKTGVGKS. Residue 296–301 coordinates GTP; it reads GVGKSA. Mg(2+) is bound at residue Ser-300. Positions 319-323 are G2; the sequence is PSTNK. Residues 340–343 are G3; the sequence is DTPG. The interval 412-415 is G4; it reads THAS. GTP contacts are provided by residues His-413 and 461–462; that span reads EN. Residues 461 to 463 form a G5 region; it reads ENH. Disordered regions lie at residues 540–585 and 611–650; these read LPDE…LTKE and RRRK…PMPD. Acidic residues predominate over residues 543–567; the sequence is EQLDESDESDDDEEEEDSEADDYDE. A compositionally biased stretch (basic and acidic residues) spans 574–585; that stretch reads LSKEELEELTKE. The segment covering 629-638 has biased composition (acidic residues); sequence AQPDEADDEA. Residues 641-650 show a composition bias toward low complexity; sequence PAAVPVPMPD. A helical membrane pass occupies residues 893–914; that stretch reads MVLIGIVPILRSLINCRFGFGG.

This sequence belongs to the TRAFAC class TrmE-Era-EngA-EngB-Septin-like GTPase superfamily. AIG1/Toc34/Toc159-like paraseptin GTPase family. TOC159 subfamily. As to quaternary structure, part of the TOC core complex. The cofactor is Mg(2+).

It is found in the plastid. The protein localises to the chloroplast outer membrane. Its function is as follows. GTPase involved in protein precursor import into chloroplasts. Seems to recognize chloroplast-destined precursor proteins and regulate their presentation to the translocation channel through GTP hydrolysis. Probably specialized in the import of nuclear encoded non-photosynthetic preproteins from the cytoplasm to the chloroplast. This chain is Translocase of chloroplast 101, chloroplastic, found in Physcomitrium patens (Spreading-leaved earth moss).